A 96-amino-acid polypeptide reads, in one-letter code: MSAVTRCEDGLVLRLYIQPKASRDCIVGLHGDEVKVAITAPPVDGQANSHLVKFLGKQFRVAKSQVAIEKGELGRHKQVKIIHPQQIPPEIAALTE.

It belongs to the UPF0235 family.

This chain is UPF0235 protein YggU, found in Salmonella arizonae (strain ATCC BAA-731 / CDC346-86 / RSK2980).